The following is a 295-amino-acid chain: Sulfotransferase 1 family member D1 (295 aa).

48-53 (KSGTTW) serves as a coordination point for 3'-phosphoadenylyl sulfate. Residues phenylalanine 81 and 106-108 (KTH) each bind substrate. The active-site Proton acceptor is the histidine 108. 3'-phosphoadenylyl sulfate contacts are provided by arginine 130 and serine 138. Phenylalanine 142 is a binding site for substrate. 3'-phosphoadenylyl sulfate-binding positions include tyrosine 193, 227-232 (SSFSVM), and 257-259 (RKG).

Belongs to the sulfotransferase 1 family. As to expression, detected in kidney and liver. Detected in kidney collecting duct cells.

The protein localises to the cytoplasm. In terms of biological role, sulfotransferase with broad substrate specificity that utilizes 3'-phospho-5'-adenylyl sulfate (PAPS) as sulfonate donor to catalyze the sulfate conjugation of catecholamines, such as dopamine, prostaglandins, leukotriene E4, drugs and xenobiotic compounds. Has sulfotransferase activity towards p-nitrophenol, 2-naphthylamine and minoxidil (in vitro). Sulfonation increases the water solubility of most compounds, and therefore their renal excretion, but it can also result in bioactivation to form active metabolites. The sequence is that of Sulfotransferase 1 family member D1 (Sult1d1) from Mus musculus (Mouse).